Here is a 194-residue protein sequence, read N- to C-terminus: Imidazoleglycerol-phosphate dehydratase (194 aa).

The protein belongs to the imidazoleglycerol-phosphate dehydratase family.

The protein localises to the cytoplasm. The enzyme catalyses D-erythro-1-(imidazol-4-yl)glycerol 3-phosphate = 3-(imidazol-4-yl)-2-oxopropyl phosphate + H2O. It participates in amino-acid biosynthesis; L-histidine biosynthesis; L-histidine from 5-phospho-alpha-D-ribose 1-diphosphate: step 6/9. This is Imidazoleglycerol-phosphate dehydratase from Bacillus pumilus (strain SAFR-032).